Consider the following 390-residue polypeptide: Chorismate synthase (390 aa).

NADP(+)-binding residues include arginine 39 and arginine 45. FMN-binding positions include 132 to 134 (RSS), 253 to 254 (NA), glycine 298, 313 to 317 (KPIPT), and arginine 339.

It belongs to the chorismate synthase family. Homotetramer. The cofactor is FMNH2.

The catalysed reaction is 5-O-(1-carboxyvinyl)-3-phosphoshikimate = chorismate + phosphate. It participates in metabolic intermediate biosynthesis; chorismate biosynthesis; chorismate from D-erythrose 4-phosphate and phosphoenolpyruvate: step 7/7. In terms of biological role, catalyzes the anti-1,4-elimination of the C-3 phosphate and the C-6 proR hydrogen from 5-enolpyruvylshikimate-3-phosphate (EPSP) to yield chorismate, which is the branch point compound that serves as the starting substrate for the three terminal pathways of aromatic amino acid biosynthesis. This reaction introduces a second double bond into the aromatic ring system. In Shouchella clausii (strain KSM-K16) (Alkalihalobacillus clausii), this protein is Chorismate synthase.